We begin with the raw amino-acid sequence, 418 residues long: UDP-N-acetylglucosamine 1-carboxyvinyltransferase 2 (418 aa).

Residue 22 to 23 coordinates phosphoenolpyruvate; the sequence is KN. Residue R92 participates in UDP-N-acetyl-alpha-D-glucosamine binding. C116 (proton donor) is an active-site residue. The residue at position 116 (C116) is a 2-(S-cysteinyl)pyruvic acid O-phosphothioketal. 2 residues coordinate UDP-N-acetyl-alpha-D-glucosamine: D305 and I327.

It belongs to the EPSP synthase family. MurA subfamily.

It localises to the cytoplasm. It carries out the reaction phosphoenolpyruvate + UDP-N-acetyl-alpha-D-glucosamine = UDP-N-acetyl-3-O-(1-carboxyvinyl)-alpha-D-glucosamine + phosphate. Its pathway is cell wall biogenesis; peptidoglycan biosynthesis. Its function is as follows. Cell wall formation. Adds enolpyruvyl to UDP-N-acetylglucosamine. This is UDP-N-acetylglucosamine 1-carboxyvinyltransferase 2 from Mesorhizobium japonicum (strain LMG 29417 / CECT 9101 / MAFF 303099) (Mesorhizobium loti (strain MAFF 303099)).